The primary structure comprises 210 residues: Mitochondrial cardiolipin hydrolase (210 aa).

Residues 1–5 (MLLWG) are Mitochondrial intermembrane-facing. A helical membrane pass occupies residues 6-24 (RWKLAAGLAGLALSLELFY). Residues 25-210 (RYMRRRKPLR…YNFFPEKENK (186 aa)) are Cytoplasmic-facing. Residues 138-165 (SSGYMHHKFAVVDGTVVLTGSLNWTVQA) enclose the PLD phosphodiesterase domain. Active-site residues include His-143, Lys-145, and Asp-150.

This sequence belongs to the phospholipase D family. MitoPLD/Zucchini subfamily. As to quaternary structure, homodimer.

It localises to the mitochondrion outer membrane. It carries out the reaction a cardiolipin + H2O = a 1,2-diacyl-sn-glycero-3-phospho-(1'-sn-glycerol) + a 1,2-diacyl-sn-glycero-3-phosphate + H(+). In terms of biological role, presents phospholipase and nuclease activities, depending on the different physiological conditions. Plays a key role in mitochondrial fusion and fission via its phospholipase activity. In its phospholipase role, it uses the mitochondrial lipid cardiolipin as substrate to generate phosphatidate (PA or 1,2-diacyl-sn-glycero-3-phosphate), a second messenger signaling lipid. Production of PA facilitates Mitofusin-mediated fusion, whereas the cleavage of PA by the Lipin family of phosphatases produces diacylgycerol (DAG) which promotes mitochondrial fission. Regulates mitochondrial shape through facilitating mitochondrial fusion. During spermatogenesis, plays a critical role in PIWI-interacting RNA (piRNA) biogenesis. piRNAs provide essential protection against the activity of mobile genetic elements. piRNA-mediated transposon silencing is thus critical for maintaining genome stability, in particular in germline cells when transposons are mobilized as a consequence of wide-spread genomic demethylation. Has been shown to be a backbone-non-specific, single strand-specific nuclease, cleaving either RNA or DNA substrates with similar affinity. Produces 5' phosphate and 3' hydroxyl termini, suggesting it could directly participate in the processing of primary piRNA transcripts. Has been proposed to act as a cardiolipin hydrolase to generate phosphatidic acid at mitochondrial surface. Although it cannot be excluded that it can act as a phospholipase in some circumstances, this activity could not be confirmed. The sequence is that of Mitochondrial cardiolipin hydrolase (pld6) from Xenopus laevis (African clawed frog).